The sequence spans 307 residues: Ribosomal RNA small subunit methyltransferase H (307 aa).

S-adenosyl-L-methionine contacts are provided by residues 34–36 (GGH), aspartate 54, phenylalanine 79, aspartate 101, and glutamine 108.

Belongs to the methyltransferase superfamily. RsmH family.

The protein localises to the cytoplasm. It carries out the reaction cytidine(1402) in 16S rRNA + S-adenosyl-L-methionine = N(4)-methylcytidine(1402) in 16S rRNA + S-adenosyl-L-homocysteine + H(+). In terms of biological role, specifically methylates the N4 position of cytidine in position 1402 (C1402) of 16S rRNA. The polypeptide is Ribosomal RNA small subunit methyltransferase H (Vesicomyosocius okutanii subsp. Calyptogena okutanii (strain HA)).